We begin with the raw amino-acid sequence, 278 residues long: MQVHERSHTGGHTFQCNHGNEKKAPAAGKVHSEGGSARMSLLILVSIFLCAASVMFLVYKYFPQLSEEELEKIKVPRDMDDAKALGKVLSKYKDTFYVEVLVAYFTTYIFLQTFAIPGSIFLSILSGFLYPFPLALFLVCLCSGLGASFCYLLSYLVGRPVVYKYLSDKAIKWSQQVERHRDHLINYIIFLRITPFLPNWFINITSPVINVPLKVFFLGTFIGVAPPSFVAIKAGTTLYQLTTAGEAVSWNSVIILMVLAVLSILPAIFQKKLKQKFE.

The interval 1–31 (MQVHERSHTGGHTFQCNHGNEKKAPAAGKVH) is disordered. A run of 6 helical transmembrane segments spans residues 39-59 (MSLL…FLVY), 96-116 (FYVE…TFAI), 142-162 (CSGL…RPVV), 184-204 (LINY…FINI), 212-232 (PLKV…FVAI), and 249-269 (SWNS…PAIF). Residues 127–238 (GFLYPFPLAL…FVAIKAGTTL (112 aa)) form a VTT domain; required for its function in autophagy region.

This sequence belongs to the TMEM41 family.

It is found in the endoplasmic reticulum membrane. Its subcellular location is the endomembrane system. The enzyme catalyses a 1,2-diacyl-sn-glycero-3-phospho-L-serine(in) = a 1,2-diacyl-sn-glycero-3-phospho-L-serine(out). It catalyses the reaction cholesterol(in) = cholesterol(out). It carries out the reaction a 1,2-diacyl-sn-glycero-3-phosphocholine(in) = a 1,2-diacyl-sn-glycero-3-phosphocholine(out). The catalysed reaction is a 1,2-diacyl-sn-glycero-3-phosphoethanolamine(in) = a 1,2-diacyl-sn-glycero-3-phosphoethanolamine(out). Functionally, phospholipid scramblase involved in lipid homeostasis and membrane dynamics processes. Has phospholipid scramblase activity toward cholesterol and phosphatidylserine, as well as phosphatidylethanolamine and phosphatidylcholine. Required for autophagosome formation: participates in early stages of autophagosome biogenesis at the endoplasmic reticulum (ER) membrane by reequilibrating the leaflets of the ER as lipids are extracted by atg2 (atg2a or atg2b) to mediate autophagosome assembly. In addition to autophagy, involved in other processes in which phospholipid scramblase activity is required. Required for normal motor neuron development. The polypeptide is Transmembrane protein 41B (Xenopus laevis (African clawed frog)).